A 176-amino-acid chain; its full sequence is Large ribosomal subunit protein uL6 (176 aa).

Belongs to the universal ribosomal protein uL6 family. Part of the 50S ribosomal subunit.

This protein binds to the 23S rRNA, and is important in its secondary structure. It is located near the subunit interface in the base of the L7/L12 stalk, and near the tRNA binding site of the peptidyltransferase center. The chain is Large ribosomal subunit protein uL6 from Lactobacillus gasseri (strain ATCC 33323 / DSM 20243 / BCRC 14619 / CIP 102991 / JCM 1131 / KCTC 3163 / NCIMB 11718 / NCTC 13722 / AM63).